Reading from the N-terminus, the 60-residue chain is UPF0434 protein ETA_21370 (60 aa).

Belongs to the UPF0434 family.

The sequence is that of UPF0434 protein ETA_21370 from Erwinia tasmaniensis (strain DSM 17950 / CFBP 7177 / CIP 109463 / NCPPB 4357 / Et1/99).